The following is a 458-amino-acid chain: Protein amnionless (458 aa).

Residues 1–19 (MGALGRALLWLQLCALARA) form the signal peptide. The Extracellular portion of the chain corresponds to 20-366 (AYKLWVPTTD…LGSGSRAGLA (347 aa)). Asn-35 is a glycosylation site (N-linked (GlcNAc...) asparagine). Cystine bridges form between Cys-43-Cys-96, Cys-137-Cys-213, Cys-205-Cys-211, Cys-223-Cys-249, Cys-234-Cys-250, and Cys-239-Cys-253. The segment at 67–87 (SDMLLPRDGEFVLASGAGFGA) is interaction with CUBN. Residues 203–254 (GACADPSGCVCGDAEVQPWICAALLQPLGGRCPPAACPDALRPEGQCCDLCG) form the VWFC domain. Residues 367 to 387 (GGVAAGLLLLLLALAAGLLLL) traverse the membrane as a helical segment. The Cytoplasmic segment spans residues 388 to 458 (RRAPRLRWTK…VNPLFAEAEA (71 aa)). The tract at residues 422–446 (SVGPVPRTPQPPPAQQAGSSSTSRS) is disordered.

Interacts (via extracellular region) with CUBN/cubilin. This gives rise to a huge complex containing one AMN chain and three CUBN chains. N-glycosylated. Post-translationally, a soluble form arises by proteolytic removal of the membrane anchor. In terms of tissue distribution, detected in kidney (at protein level). Detected in kidney and ileum.

It is found in the apical cell membrane. Its subcellular location is the cell membrane. The protein localises to the endosome membrane. It localises to the membrane. The protein resides in the coated pit. It is found in the secreted. Its function is as follows. Membrane-bound component of the endocytic receptor formed by AMN and CUBN. Required for normal CUBN glycosylation and trafficking to the cell surface. The complex formed by AMN and CUBN is required for efficient absorption of vitamin B12. Required for normal CUBN-mediated protein transport in the kidney. This Canis lupus familiaris (Dog) protein is Protein amnionless (AMN).